The chain runs to 322 residues: Solute carrier family 35 member B1 (322 aa).

8 helical membrane-spanning segments follow: residues 12 to 32 (LRLP…GILQ), 51 to 71 (FALT…KILI), 85 to 105 (WLYA…NSAL), 136 to 156 (YPLA…LFMY), 168 to 188 (TVGF…LTGV), 210 to 230 (LWST…WEFL), 243 to 263 (ILLF…TVVY), and 285 to 305 (VILF…LVFL). The Di-lysine motif motif lies at 318-322 (KKTSH).

This sequence belongs to the nucleotide-sugar transporter family. SLC35B subfamily.

It localises to the endoplasmic reticulum membrane. The catalysed reaction is ADP(in) + ATP(out) = ADP(out) + ATP(in). It carries out the reaction UDP(out) + ATP(in) = UDP(in) + ATP(out). It catalyses the reaction UTP(out) + ATP(in) = UTP(in) + ATP(out). The enzyme catalyses dATP(out) + ATP(in) = dATP(in) + ATP(out). Its function is as follows. ATP:ADP antiporter that catalyzes the exchange of ATP and ADP across the endoplasmic reticulum (ER) membrane. Imports ATP from the cytosol to the ER lumen and exports ADP in the opposite direction. Regulates ER energy metabolism and protein biogenesis. Appears to be part of a calcium-dependent ER to cytosol low energy response axis, where calcium efflux from ER to the cytosol triggers ATP import into the ER lumen to maintain sufficient ATP supply. Provides ATP to ER chaperone HSPA5 that drives protein folding and trafficking in the ER. Can transport dATP, UTP or UDP in exchange for ATP, but the physiological relevance of this process remains to be established. The polypeptide is Solute carrier family 35 member B1 (Slc35b1) (Rattus norvegicus (Rat)).